The sequence spans 211 residues: Beta-crystallin B3 (211 aa).

Met1 bears the N-acetylmethionine mark. Ala2 carries the N-acetylalanine; in Beta-crystallin B3, N-terminally processed modification. The tract at residues 2–23 (AEQHGAPEQAAAGKSHGDLGGS) is N-terminal arm. Beta/gamma crystallin 'Greek key' domains follow at residues 24–63 (YKVI…QVES) and 64–108 (GPWL…RPLN). The segment at 109–113 (IDSPH) is connecting peptide. 2 Beta/gamma crystallin 'Greek key' domains span residues 114–155 (HKLH…RAIN) and 156–198 (GTWV…RRIR). Residues 200–211 (QKWHKRGRFPSS) are C-terminal arm.

It belongs to the beta/gamma-crystallin family. Homo/heterodimer, or complexes of higher-order. The structure of beta-crystallin oligomers seems to be stabilized through interactions between the N-terminal arms.

Its function is as follows. Crystallins are the dominant structural components of the vertebrate eye lens. This is Beta-crystallin B3 (CRYBB3) from Homo sapiens (Human).